A 357-amino-acid chain; its full sequence is MSESMFSRRDFLLGGTALAGTLLLDSFGDWRRRAEAAEGEVNLYSGRHYNTDNQIYREFTQKTGIKVNLIEGEADALLARLKSEGSRSPADVFITVDAGRLWQATQANLLRPLTQAQAPKLYQAVPANLRDPQGRWFALSKRARVIMYNRDRVNASQLSTYEDLANPKWRNQILVRSSSNVYNLSLTGEMIAADGAAKTEAWARGLVQNFARQPQGGDTPQILACAAGVGSLAIANTYYLVRLFKSKKAEEREAARKIKVFFPNQKGRGTHVNISGAGIVRTAPNPRAAQLLLEYLLSSQAQAVFARGNGEYPVLRGVSLDPILAGFGQFKESKISASVFGANNAQALQLMDRAGWK.

The segment at residues 1–36 (MSESMFSRRDFLLGGTALAGTLLLDSFGDWRRRAEA) is a signal peptide (tat-type signal). Fe cation is bound by residues His-48, Tyr-49, Tyr-182, Tyr-238, and Tyr-239.

This sequence belongs to the bacterial solute-binding protein 1 family. Predicted to be exported by the Tat system. The position of the signal peptide cleavage has not been experimentally proven.

The protein resides in the cellular thylakoid membrane. In terms of biological role, plays an important role in protecting the acceptor side of photosystem II (PSII) against oxidative damage, especially under iron-limiting growth conditions. May also be part of a periplasmic ABC transporter complex involved in iron import. The sequence is that of Iron deficiency-induced protein A (idiA) from Synechococcus elongatus (strain ATCC 33912 / PCC 7942 / FACHB-805) (Anacystis nidulans R2).